The chain runs to 406 residues: Acetylornithine/succinyldiaminopimelate aminotransferase (406 aa).

Residues 108 to 109 (GT) and Phe-141 each bind pyridoxal 5'-phosphate. Arg-144 contributes to the N(2)-acetyl-L-ornithine binding site. 226-229 (DEVQ) lines the pyridoxal 5'-phosphate pocket. Lys-255 is modified (N6-(pyridoxal phosphate)lysine). N(2)-acetyl-L-ornithine is bound at residue Ser-283. Thr-284 lines the pyridoxal 5'-phosphate pocket.

It belongs to the class-III pyridoxal-phosphate-dependent aminotransferase family. ArgD subfamily. In terms of assembly, homodimer. The cofactor is pyridoxal 5'-phosphate.

The protein localises to the cytoplasm. It catalyses the reaction N(2)-acetyl-L-ornithine + 2-oxoglutarate = N-acetyl-L-glutamate 5-semialdehyde + L-glutamate. The enzyme catalyses N-succinyl-(2S,6S)-2,6-diaminopimelate + 2-oxoglutarate = (S)-2-succinylamino-6-oxoheptanedioate + L-glutamate. Its pathway is amino-acid biosynthesis; L-arginine biosynthesis; N(2)-acetyl-L-ornithine from L-glutamate: step 4/4. It participates in amino-acid biosynthesis; L-lysine biosynthesis via DAP pathway; LL-2,6-diaminopimelate from (S)-tetrahydrodipicolinate (succinylase route): step 2/3. In terms of biological role, involved in both the arginine and lysine biosynthetic pathways. In Escherichia coli O157:H7, this protein is Acetylornithine/succinyldiaminopimelate aminotransferase.